The sequence spans 343 residues: Anthranilate phosphoribosyltransferase (343 aa).

5-phospho-alpha-D-ribose 1-diphosphate-binding positions include G84, 87 to 88 (GD), T92, 94 to 97 (NIST), 112 to 120 (KHGNRSVSS), and S124. Residue G84 coordinates anthranilate. S96 contacts Mg(2+). N115 lines the anthranilate pocket. R170 provides a ligand contact to anthranilate. Mg(2+) contacts are provided by D229 and E230.

This sequence belongs to the anthranilate phosphoribosyltransferase family. In terms of assembly, homodimer. Requires Mg(2+) as cofactor.

It catalyses the reaction N-(5-phospho-beta-D-ribosyl)anthranilate + diphosphate = 5-phospho-alpha-D-ribose 1-diphosphate + anthranilate. It participates in amino-acid biosynthesis; L-tryptophan biosynthesis; L-tryptophan from chorismate: step 2/5. Its function is as follows. Catalyzes the transfer of the phosphoribosyl group of 5-phosphorylribose-1-pyrophosphate (PRPP) to anthranilate to yield N-(5'-phosphoribosyl)-anthranilate (PRA). This chain is Anthranilate phosphoribosyltransferase, found in Stenotrophomonas maltophilia (strain K279a).